The sequence spans 356 residues: Histidinol-phosphate aminotransferase (356 aa).

Position 214 is an N6-(pyridoxal phosphate)lysine (K214).

This sequence belongs to the class-II pyridoxal-phosphate-dependent aminotransferase family. Histidinol-phosphate aminotransferase subfamily. As to quaternary structure, homodimer. Requires pyridoxal 5'-phosphate as cofactor.

It catalyses the reaction L-histidinol phosphate + 2-oxoglutarate = 3-(imidazol-4-yl)-2-oxopropyl phosphate + L-glutamate. Its pathway is amino-acid biosynthesis; L-histidine biosynthesis; L-histidine from 5-phospho-alpha-D-ribose 1-diphosphate: step 7/9. This Shigella flexneri serotype 5b (strain 8401) protein is Histidinol-phosphate aminotransferase.